We begin with the raw amino-acid sequence, 352 residues long: Protein RecA (352 aa).

66-73 (GPESSGKT) is an ATP binding site. The segment at 330–352 (TKDDSKVATVDKANEEQAAEPVQ) is disordered.

It belongs to the RecA family.

The protein resides in the cytoplasm. Can catalyze the hydrolysis of ATP in the presence of single-stranded DNA, the ATP-dependent uptake of single-stranded DNA by duplex DNA, and the ATP-dependent hybridization of homologous single-stranded DNAs. It interacts with LexA causing its activation and leading to its autocatalytic cleavage. The protein is Protein RecA of Psychrobacter cryohalolentis (strain ATCC BAA-1226 / DSM 17306 / VKM B-2378 / K5).